The sequence spans 116 residues: ATP synthase lipid-binding protein, mitochondrial (116 aa).

A mitochondrion-targeting transit peptide spans 1-24 (MYCQRLALPLTRSLLASRAPLALR). The chain crosses the membrane as a helical span at residues 57–77 (VGVAGSGAGIGNVFGALVIGY). K84 carries the post-translational modification N6,N6,N6-trimethyllysine. A helical transmembrane segment spans residues 92 to 112 (ILGFALSEAMGLFCLTMGFMI).

It belongs to the ATPase C chain family. In terms of assembly, F-type ATPases have 2 components, CF(1) - the catalytic core - and CF(0) - the membrane proton channel. CF(1) has five subunits: alpha(3), beta(3), gamma(1), delta(1), epsilon(1). CF(0) has three main subunits: a, b and c. Post-translationally, trimethylated by ATPSCKMT at Lys-84. Methylation may be required for proper incorporation of the C subunit into the ATP synthase complex and mitochondrial respiration.

It localises to the mitochondrion membrane. Functionally, mitochondrial membrane ATP synthase (F(1)F(0) ATP synthase or Complex V) produces ATP from ADP in the presence of a proton gradient across the membrane which is generated by electron transport complexes of the respiratory chain. F-type ATPases consist of two structural domains, F(1) - containing the extramembraneous catalytic core and F(0) - containing the membrane proton channel, linked together by a central stalk and a peripheral stalk. During catalysis, ATP synthesis in the catalytic domain of F(1) is coupled via a rotary mechanism of the central stalk subunits to proton translocation. Part of the complex F(0) domain. A homomeric c-ring of probably 10 subunits is part of the complex rotary element. The chain is ATP synthase lipid-binding protein, mitochondrial from Caenorhabditis briggsae.